An 843-amino-acid chain; its full sequence is Protein P (843 aa).

Positions 1–177 (MPLSYQHFRK…FCGSPYSWEQ (177 aa)) are terminal protein domain (TP). Residues 178 to 346 (ELQHGRLVFQ…YCLTHIVNLL (169 aa)) form a spacer region. 2 disordered regions span residues 224-273 (GLQP…SSTS) and 288-316 (HLSTSKRQSSSGHAVELHNIPPSSARSQS). Positions 288–299 (HLSTSKRQSSSG) are enriched in polar residues. The tract at residues 347-690 (EDWGPCTEHG…YLNLYPVARQ (344 aa)) is polymerase/reverse transcriptase domain (RT). One can recognise a Reverse transcriptase domain in the interval 357–600 (EHNIRIPRTP…YSLNFMGYVI (244 aa)). Residues aspartate 429, aspartate 551, and aspartate 552 each contribute to the Mg(2+) site.

Belongs to the hepadnaviridae P protein family.

The catalysed reaction is DNA(n) + a 2'-deoxyribonucleoside 5'-triphosphate = DNA(n+1) + diphosphate. It carries out the reaction Endonucleolytic cleavage to 5'-phosphomonoester.. Activated by host HSP70 and HSP40 in vitro to be able to bind the epsilon loop of the pgRNA. Because deletion of the RNase H region renders the protein partly chaperone-independent, the chaperones may be needed indirectly to relieve occlusion of the RNA-binding site by this domain. Inhibited by several reverse-transcriptase inhibitors: Lamivudine, Adefovir and Entecavir. Functionally, multifunctional enzyme that converts the viral RNA genome into dsDNA in viral cytoplasmic capsids. This enzyme displays a DNA polymerase activity that can copy either DNA or RNA templates, and a ribonuclease H (RNase H) activity that cleaves the RNA strand of RNA-DNA heteroduplexes in a partially processive 3'- to 5'-endonucleasic mode. Neo-synthesized pregenomic RNA (pgRNA) are encapsidated together with the P protein, and reverse-transcribed inside the nucleocapsid. Initiation of reverse-transcription occurs first by binding the epsilon loop on the pgRNA genome, and is initiated by protein priming, thereby the 5'-end of (-)DNA is covalently linked to P protein. Partial (+)DNA is synthesized from the (-)DNA template and generates the relaxed circular DNA (RC-DNA) genome. After budding and infection, the RC-DNA migrates in the nucleus, and is converted into a plasmid-like covalently closed circular DNA (cccDNA). The activity of P protein does not seem to be necessary for cccDNA generation, and is presumably released from (+)DNA by host nuclear DNA repair machinery. In Homo sapiens (Human), this protein is Protein P.